The chain runs to 150 residues: Leukotriene C4 synthase (150 aa).

The Cytoplasmic portion of the chain corresponds to 1–6 (MKDEVA). The helical transmembrane segment at 7–27 (LLASVTLLGVLLQAYFSLQVI) threads the bilayer. Residues 28–48 (SARRAFRVSPPLTTGPPEFER) are Lumenal-facing. Arg30 provides a ligand contact to glutathione. Arg31 acts as the Proton donor in catalysis. Ser36 carries the post-translational modification Phosphoserine. Residues 49–69 (IYRAQVNCSEYFPLFLAMLWV) traverse the membrane as a helical segment. Residues 51-55 (RAQVN) and 58-59 (EY) contribute to the glutathione site. The Cytoplasmic segment spans residues 70-73 (AGIF). A helical membrane pass occupies residues 74–94 (FHEGAAALCGLVYLFARLRYF). 93–97 (YFQGY) lines the glutathione pocket. The Lumenal portion of the chain corresponds to 95–104 (QGYARSAQQR). Arg104 (proton acceptor) is an active-site residue. The helical transmembrane segment at 105-124 (LAPLYASARALWLLVALAAL) threads the bilayer. Residues 125–150 (GLLAHFLPAELRAALLGQLRKLLLRS) are Cytoplasmic-facing.

Belongs to the MAPEG family. In terms of assembly, homotrimer. Interacts with ALOX5AP and ALOX5. In terms of processing, phosphorylation at Ser-36 by RPS6KB1 inhibits the leukotriene-C4 synthase activity.

The protein localises to the nucleus outer membrane. It localises to the endoplasmic reticulum membrane. The protein resides in the nucleus membrane. The enzyme catalyses leukotriene C4 = leukotriene A4 + glutathione. It carries out the reaction (13S,14S)-epoxy-(4Z,7Z,9E,11E,16Z,19Z)-docosahexaenoate + glutathione = (13R)-S-glutathionyl-(14S)-hydroxy-(4Z,7Z,9E,11E,16Z,19Z)-docosahexaenoate. Its pathway is lipid metabolism; leukotriene C4 biosynthesis. With respect to regulation, inhibited by MK886. In terms of biological role, catalyzes the conjugation of leukotriene A4 with reduced glutathione (GSH) to form leukotriene C4 with high specificity. Can also catalyze the transfer of a glutathionyl group from glutathione (GSH) to 13(S),14(S)-epoxy-docosahexaenoic acid to form maresin conjugate in tissue regeneration 1 (MCTR1), a bioactive lipid mediator that possess potent anti-inflammatory and proresolving actions. The chain is Leukotriene C4 synthase (LTC4S) from Bos taurus (Bovine).